A 402-amino-acid polypeptide reads, in one-letter code: Nicotinate phosphoribosyltransferase (402 aa).

A Phosphohistidine; by autocatalysis modification is found at histidine 224.

This sequence belongs to the NAPRTase family. In terms of processing, transiently phosphorylated on a His residue during the reaction cycle. Phosphorylation strongly increases the affinity for substrates and increases the rate of nicotinate D-ribonucleotide production. Dephosphorylation regenerates the low-affinity form of the enzyme, leading to product release.

The enzyme catalyses nicotinate + 5-phospho-alpha-D-ribose 1-diphosphate + ATP + H2O = nicotinate beta-D-ribonucleotide + ADP + phosphate + diphosphate. Its pathway is cofactor biosynthesis; NAD(+) biosynthesis; nicotinate D-ribonucleotide from nicotinate: step 1/1. Its function is as follows. Catalyzes the synthesis of beta-nicotinate D-ribonucleotide from nicotinate and 5-phospho-D-ribose 1-phosphate at the expense of ATP. This Neisseria meningitidis serogroup A / serotype 4A (strain DSM 15465 / Z2491) protein is Nicotinate phosphoribosyltransferase.